Consider the following 344-residue polypeptide: Tetraacyldisaccharide 4'-kinase (344 aa).

65-72 (HAGGTGKT) provides a ligand contact to ATP.

The protein belongs to the LpxK family.

The catalysed reaction is a lipid A disaccharide + ATP = a lipid IVA + ADP + H(+). It functions in the pathway glycolipid biosynthesis; lipid IV(A) biosynthesis; lipid IV(A) from (3R)-3-hydroxytetradecanoyl-[acyl-carrier-protein] and UDP-N-acetyl-alpha-D-glucosamine: step 6/6. Its function is as follows. Transfers the gamma-phosphate of ATP to the 4'-position of a tetraacyldisaccharide 1-phosphate intermediate (termed DS-1-P) to form tetraacyldisaccharide 1,4'-bis-phosphate (lipid IVA). The polypeptide is Tetraacyldisaccharide 4'-kinase (Neisseria meningitidis serogroup A / serotype 4A (strain DSM 15465 / Z2491)).